The chain runs to 432 residues: Gamma-glutamyl phosphate reductase (432 aa).

It belongs to the gamma-glutamyl phosphate reductase family.

Its subcellular location is the cytoplasm. The enzyme catalyses L-glutamate 5-semialdehyde + phosphate + NADP(+) = L-glutamyl 5-phosphate + NADPH + H(+). It functions in the pathway amino-acid biosynthesis; L-proline biosynthesis; L-glutamate 5-semialdehyde from L-glutamate: step 2/2. Functionally, catalyzes the NADPH-dependent reduction of L-glutamate 5-phosphate into L-glutamate 5-semialdehyde and phosphate. The product spontaneously undergoes cyclization to form 1-pyrroline-5-carboxylate. The polypeptide is Gamma-glutamyl phosphate reductase (Corynebacterium melassecola).